Reading from the N-terminus, the 29-residue chain is Galanin (29 aa).

The residue at position 29 (Ala-29) is an Alanine amide.

This sequence belongs to the galanin family.

The protein resides in the secreted. Contracts smooth muscle of the gastrointestinal and genitourinary tract, regulates growth hormone release, modulates insulin release, and may be involved in the control of adrenal secretion. The polypeptide is Galanin (gal) (Amia calva (Bowfin)).